The chain runs to 193 residues: 3-isopropylmalate dehydratase small subunit (193 aa).

Belongs to the LeuD family. LeuD type 1 subfamily. Heterodimer of LeuC and LeuD.

The catalysed reaction is (2R,3S)-3-isopropylmalate = (2S)-2-isopropylmalate. Its pathway is amino-acid biosynthesis; L-leucine biosynthesis; L-leucine from 3-methyl-2-oxobutanoate: step 2/4. Catalyzes the isomerization between 2-isopropylmalate and 3-isopropylmalate, via the formation of 2-isopropylmaleate. In Listeria innocua serovar 6a (strain ATCC BAA-680 / CLIP 11262), this protein is 3-isopropylmalate dehydratase small subunit.